A 1050-amino-acid chain; its full sequence is Integrin alpha-5 (1050 aa).

The signal sequence occupies residues 1-32; the sequence is MQLPRGSRVPGLVATFLFPVLCALLTFSSVRG. Residues 33–996 are Extracellular-facing; that stretch reads FNLAVEQPAV…IHWAKPESSY (964 aa). FG-GAP repeat units lie at residues 34–99, 116–175, 183–235, 249–301, 302–367, 368–426, and 430–493; these read NLAV…GTNC, DTPQ…NFTT, RTDF…QEAY, QTRQ…GTDL, RSLY…MEST, PHLI…GVDS, and QVLQ…ISPN. 3 N-linked (GlcNAc...) asparagine glycosylation sites follow: Asn75, Asn95, and Asn98. 2 cysteine pairs are disulfide-bonded: Cys90–Cys99 and Cys145–Cys166. Asn172 carries N-linked (GlcNAc...) asparagine glycosylation. Cys182 and Cys195 are joined by a disulfide. Ca(2+) is bound by residues Glu270, Ser272, Asp274, Thr276, and Asp278. N-linked (GlcNAc...) asparagine glycosylation is found at Asn287, Asn297, and Asn306. Residues Asp324, Asn326, Asp328, Leu330, Asp332, Asp390, Asp392, Asp394, Asp398, Asp454, Asp456, Asn458, Tyr460, and Asp462 each coordinate Ca(2+). A disulfide bridge connects residues Cys502 and Cys513. Asn507, Asn515, Asn521, and Asn600 each carry an N-linked (GlcNAc...) asparagine glycan. Cys519 and Cys575 are joined by a disulfide. A disulfide bridge connects residues Cys636 and Cys642. Residues Asn649, Asn714, Asn763, and Asn861 are each glycosylated (N-linked (GlcNAc...) asparagine). A disulfide bridge links Cys708 with Cys721. Disulfide bonds link Cys839–Cys958, Cys862–Cys922, and Cys910–Cys917. Residues 997 to 1022 traverse the membrane as a helical segment; that stretch reads GVPLWIIILAILIGLLLLALLIYVLY. The Cytoplasmic portion of the chain corresponds to 1023 to 1050; sequence KLGFFKRSYQYGTAMEKAELKPQAASEA. A GFFKR motif motif is present at residues 1025–1029; that stretch reads GFFKR.

This sequence belongs to the integrin alpha chain family. In terms of assembly, heterodimer of an alpha and a beta subunit. The alpha subunit is composed of a heavy and a light chain linked by a disulfide bond. Alpha-5 associates with beta-1.

It is found in the cell membrane. The protein localises to the cell junction. The protein resides in the focal adhesion. In terms of biological role, integrin alpha-5/beta-1 (ITGA5:ITGB1) is a receptor for fibronectin. It recognizes the sequence R-G-D in its ligands. ITGA5:ITGB1 acts as a receptor for fibrillin-1 (FBN1) and mediates R-G-D-dependent cell adhesion to FBN1. ITGA5:ITGB1 acts as a receptor for fibronectin (FN1) and mediates R-G-D-dependent cell adhesion to FN1. ITGA5:ITGB1 is a receptor for IL1B and binding is essential for IL1B signaling. ITGA5:ITGB3 is a receptor for soluble CD40LG and is required for CD40/CD40LG signaling. This is Integrin alpha-5 (itga5) from Xenopus laevis (African clawed frog).